Here is a 181-residue protein sequence, read N- to C-terminus: Large ribosomal subunit protein uL5 (181 aa).

This sequence belongs to the universal ribosomal protein uL5 family. In terms of assembly, part of the 50S ribosomal subunit; part of the 5S rRNA/L5/L18/L25 subcomplex. Contacts the 5S rRNA and the P site tRNA. Forms a bridge to the 30S subunit in the 70S ribosome.

In terms of biological role, this is one of the proteins that bind and probably mediate the attachment of the 5S RNA into the large ribosomal subunit, where it forms part of the central protuberance. In the 70S ribosome it contacts protein S13 of the 30S subunit (bridge B1b), connecting the 2 subunits; this bridge is implicated in subunit movement. Contacts the P site tRNA; the 5S rRNA and some of its associated proteins might help stabilize positioning of ribosome-bound tRNAs. The polypeptide is Large ribosomal subunit protein uL5 (Colwellia psychrerythraea (strain 34H / ATCC BAA-681) (Vibrio psychroerythus)).